Reading from the N-terminus, the 396-residue chain is Ribosomal RNA large subunit methyltransferase I (396 aa).

Residues 2–79 (TSAVYLQAGR…EKEVIDQHFF (78 aa)) enclose the PUA domain.

The protein belongs to the methyltransferase superfamily. RlmI family.

The protein localises to the cytoplasm. It catalyses the reaction cytidine(1962) in 23S rRNA + S-adenosyl-L-methionine = 5-methylcytidine(1962) in 23S rRNA + S-adenosyl-L-homocysteine + H(+). In terms of biological role, specifically methylates the cytosine at position 1962 (m5C1962) of 23S rRNA. The sequence is that of Ribosomal RNA large subunit methyltransferase I from Pseudoalteromonas translucida (strain TAC 125).